The sequence spans 124 residues: MHRFVLVATGGIFGSLARYVLSGVAQKLTTSSFPYGTVLVNLLGSLLFGLVWGILENRITFAPEARLLLLTGFMGSLTTFSTLTYEGMVLLQSHMWLQAALYIVGQTVAGIMLVWFGAGLGRLV.

A run of 4 helical transmembrane segments spans residues 4–24, 35–55, 67–87, and 100–120; these read FVLV…LSGV, YGTV…WGIL, LLLL…TYEG, and ALYI…GAGL. Residues Gly75 and Thr78 each contribute to the Na(+) site.

Belongs to the fluoride channel Fluc/FEX (TC 1.A.43) family.

It localises to the cell inner membrane. It catalyses the reaction fluoride(in) = fluoride(out). With respect to regulation, na(+) is not transported, but it plays an essential structural role and its presence is essential for fluoride channel function. Its function is as follows. Fluoride-specific ion channel. Important for reducing fluoride concentration in the cell, thus reducing its toxicity. The protein is Fluoride-specific ion channel FluC of Nitratidesulfovibrio vulgaris (strain ATCC 29579 / DSM 644 / CCUG 34227 / NCIMB 8303 / VKM B-1760 / Hildenborough) (Desulfovibrio vulgaris).